The chain runs to 1376 residues: MLFVFILLLPSCLGYIGDFRCIQTVNYNGNNASAPSISTEAVDVSKGLGTYYVLDRVYLNATLLLTGYYPVDGSNYRNLALTGTNTLSLTWFKPPFLSEFNDGIFAKVQNLKTNTPTGATSYFPTIVIGSLFGNTSYTVVLEPYNNIIMASVCTYTICQLPYTPCKPNTNGNRVIGFWHTDVKPPICLLKRNFTFNVNAPWLYFHFYQQGGTFYAYYADKPSATTFLFSVYIGDILTQYFVLPFICTPTAGSTLLPLYWVTPLLKRQYLFNFNEKGVITSAVDCASSYISEIKCKTQSLLPSTGVYDLSGYTVQPVGVVYRRVPNLPDCKIEEWLTAKSVPSPLNWERRTFQNCNFNLSSLLRYVQAESLSCNNIDASKVYGMCFGSVSVDKFAIPRSRQIDLQIGNSGFLQTANYKIDTAATSCQLYYSLPKNNVTINNYNPSSWNRRYGFNDAGVFGKSKHDVAYAQQCFTVRPSYCPCAQPDIVSACTSQTKPMSAYCPTGTIHRECSLWNGPHLRSARVGSGTYTCECTCKPNPFDTYDLRCGQIKTIVNVGDHCEGLGVLEDKCGNSDPHKGCSCANDSFIGWSHDTCLVNDRCQIFANILLNGINSGTTCSTDLQLPNTEVATGVCVRYDLYGITGQGVFKEVKADYYNSWQALLYDVNGNLNGFRDLTTNKTYTIRSCYSGRVSAAYHKEAPEPALLYRNINCSYVFTNNISREENPLNYFDSYLGCVVNADNRTDEALPNCDLRMGAGLCVDYSKSRRARRSVSTGYRLTTFEPYMPMLVNDSVQSVGGLYEMQIPTNFTIGHHEEFIQIRAPKVTIDCAAFVCGDNAACRQQLVEYGSFCDNVNAILNEVNNLLDNMQLQVASALMQGVTISSRLPDGISGPIDDINFSPLLGCIGSTCAEDGNGPSAIRGRSAIEDLLFDKVKLSDVGFVEAYNNCTGGQEVRDLLCVQSFNGIKVLPPVLSESQISGYTAGATAAAMFPPWTAAAGVPFSLNVQYRINGLGVTMNVLSENQKMIASAFNNALGAIQEGFDATNSALGKIQSVVNANAEALNNLLNQLSNRFGAISASLQEILTRLDAVEAKAQIDRLINGRLTALNAYISKQLSDSTLIKFSAAQAIEKVNECVKSQTTRINFCGNGNHILSLVQNAPYGLCFIHFSYVPTSFKTANVSPGLCISGDRGLAPKAGYFVQDNGEWKFTGSNYYYPEPITDKNSVVMISCAVNYTKAPEVFLNNSIPNLPDFKEELDKWFKNQTSIAPDLSLDFEKLNVTFLDLTYEMNRIQDAIKKLNESYINLKEVGTYEMYVKWPWYVWLLIGLAGVAVCVLLFFICCCTGCGSCCFRKCGSCCDEYGGHQDSIVIHNISAHED.

The N-terminal stretch at 1–13 (MLFVFILLLPSCL) is a signal peptide. Topologically, residues 14–1317 (GYIGDFRCIQ…GTYEMYVKWP (1304 aa)) are extracellular. Residues 15–296 (YIGDFRCIQT…SYISEIKCKT (282 aa)) form the BetaCoV S1-NTD domain. Positions 15–330 (YIGDFRCIQT…RRVPNLPDCK (316 aa)) are receptor binding site. 5 cysteine pairs are disulfide-bonded: Cys-21–Cys-158, Cys-153–Cys-187, Cys-165–Cys-246, Cys-284–Cys-294, and Cys-329–Cys-354. 3 N-linked (GlcNAc...) asparagine; by host glycosylation sites follow: Asn-31, Asn-60, and Asn-134. Asn-192 carries an N-linked (GlcNAc...) asparagine; by host glycan. Residues 327 to 618 (PDCKIEEWLT…GINSGTTCST (292 aa)) form the BetaCoV S1-CTD domain. N-linked (GlcNAc...) asparagine; by host glycosylation is present at Asn-357. Disulfide bonds link Cys-372–Cys-425 and Cys-384–Cys-616. The important for the neurovirulence stretch occupies residues 429-599 (YSLPKNNVTI…HDTCLVNDRC (171 aa)). Asn-435, Asn-582, Asn-677, Asn-709, Asn-717, Asn-740, Asn-789, and Asn-806 each carry an N-linked (GlcNAc...) asparagine; by host glycan. Fusion peptide stretches follow at residues 922–943 (SAIEDLLFDKVKLSDVGFVEAY) and 941–961 (EAYNNCTGGQEVRDLLCVQSF). Residue Asn-945 is glycosylated (N-linked (GlcNAc...) asparagine; by host). An intrachain disulfide couples Cys-946 to Cys-957. The segment at 1022-1072 (QKMIASAFNNALGAIQEGFDATNSALGKIQSVVNANAEALNNLLNQLSNRF) is heptad repeat 1. The stretch at 1051-1095 (QSVVNANAEALNNLLNQLSNRFGAISASLQEILTRLDAVEAKAQI) forms a coiled coil. 5 N-linked (GlcNAc...) asparagine; by host glycosylation sites follow: Asn-1232, Asn-1242, Asn-1261, Asn-1277, and Asn-1298. The tract at residues 1266 to 1306 (APDLSLDFEKLNVTFLDLTYEMNRIQDAIKKLNESYINLKE) is heptad repeat 2. Residues 1279–1307 (TFLDLTYEMNRIQDAIKKLNESYINLKEV) are a coiled coil. The helical transmembrane segment at 1318–1338 (WYVWLLIGLAGVAVCVLLFFI) threads the bilayer. At 1339-1376 (CCCTGCGSCCFRKCGSCCDEYGGHQDSIVIHNISAHED) the chain is on the cytoplasmic side. The short motif at 1372 to 1376 (SAHED) is the KxHxx element.

It belongs to the betacoronaviruses spike protein family. Homotrimer; each monomer consists of a S1 and a S2 subunit. The resulting peplomers protrude from the virus surface as spikes. In terms of processing, specific enzymatic cleavages in vivo yield mature proteins. The precursor is processed into S1 and S2 by host cell furin or another cellular protease to yield the mature S1 and S2 proteins. Additionally, a second cleavage leads to the release of a fusion peptide after viral attachment to host cell receptor. The cytoplasmic Cys-rich domain is palmitoylated. Spike glycoprotein is digested within host endosomes.

The protein localises to the virion membrane. It is found in the host endoplasmic reticulum-Golgi intermediate compartment membrane. It localises to the host cell membrane. Attaches the virion to the cell membrane by interacting with host receptor, initiating the infection. Its function is as follows. Mediates fusion of the virion and cellular membranes by acting as a class I viral fusion protein. Under the current model, the protein has at least three conformational states: pre-fusion native state, pre-hairpin intermediate state, and post-fusion hairpin state. During viral and target cell membrane fusion, the coiled coil regions (heptad repeats) assume a trimer-of-hairpins structure, positioning the fusion peptide in close proximity to the C-terminal region of the ectodomain. The formation of this structure appears to drive apposition and subsequent fusion of viral and target cell membranes. In terms of biological role, acts as a viral fusion peptide which is unmasked following S2 cleavage occurring upon virus endocytosis. The sequence is that of Spike glycoprotein from Murine coronavirus (strain 4) (MHV-4).